A 148-amino-acid polypeptide reads, in one-letter code: Large ribosomal subunit protein uL15 (148 aa).

The segment covering 1–12 (MSDPIKLHDLRP) has biased composition (basic and acidic residues). The tract at residues 1 to 45 (MSDPIKLHDLRPAKGANKAKTRVGRGEASKGKTAGRGTKGTKARN) is disordered.

Belongs to the universal ribosomal protein uL15 family. As to quaternary structure, part of the 50S ribosomal subunit.

Binds to the 23S rRNA. The chain is Large ribosomal subunit protein uL15 from Corynebacterium urealyticum (strain ATCC 43042 / DSM 7109).